Here is an 89-residue protein sequence, read N- to C-terminus: Small ribosomal subunit protein bS20 (89 aa).

The span at 1 to 12 (MANIKSAKKRVK) shows a compositional bias: basic residues. Positions 1-20 (MANIKSAKKRVKQTVVRNER) are disordered.

Belongs to the bacterial ribosomal protein bS20 family.

Its function is as follows. Binds directly to 16S ribosomal RNA. This is Small ribosomal subunit protein bS20 from Xylella fastidiosa (strain 9a5c).